We begin with the raw amino-acid sequence, 1233 residues long: Capping protein-inhibiting regulator of actin dynamics (1233 aa).

A phosphoserine mark is found at S7, S28, and S132. Disordered stretches follow at residues 92 to 136 (AENK…SAGT), 157 to 224 (AKHK…RRRQ), and 269 to 527 (LLEE…WQEV). Positions 157–176 (AKHKLAVKPKKQRVSKKHRR) are enriched in basic residues. Composition is skewed to basic and acidic residues over residues 200–211 (PGEDKPTWHEEE), 282–293 (EAERAPREEQQR), 302–322 (DAER…ERRR), and 329–362 (AEER…KRQE). The interval 321–472 (RRLQAQAQAE…EQQGRSGDFQ (152 aa)) is required for interaction with actin-capping proteins. Composition is skewed to acidic residues over residues 363 to 376 (EEEA…EQQE) and 397 to 407 (EEEDLGEEEEE). S420 is subject to Phosphoserine. Basic and acidic residues-rich tracts occupy residues 432 to 447 (DQER…HSEE) and 505 to 527 (VERK…WQEV). S556 carries the phosphoserine modification. T559 bears the Phosphothreonine mark. 4 disordered regions span residues 560–586 (PAKD…HALP), 629–788 (HAEA…TTEG), 815–1082 (EFTT…TEKV), and 1097–1186 (QKGF…ISDS). Residues 677 to 707 (KNAESDPRSSERDQLRPGDESTPRGRCDSRG) show a composition bias toward basic and acidic residues. A compositionally biased stretch (polar residues) spans 732–742 (GTETSKQSTEA). The span at 768-783 (ELGKGPEKSEMHREPA) shows a compositional bias: basic and acidic residues. Composition is skewed to polar residues over residues 815–825 (EFTTSSDSETA) and 852–863 (TNYSLRFNCDQQ). Over residues 876–889 (GDSADAGPPAAGSA) the composition is skewed to low complexity. Basic and acidic residues predominate over residues 908–921 (QERKQAPSTRRDSA). Residues 956-967 (PLAQKPALAPKP) show a composition bias toward low complexity. The residue at position 971 (T971) is a Phosphothreonine. S975 and S1017 each carry phosphoserine. Residues 994 to 1040 (GRPDPEPSEPSKEDQESSDRRPPSPPGPEERKGQKRDEEEEATERKP) show a composition bias toward basic and acidic residues. The segment covering 1047-1057 (ATQQEKPSQTP) has biased composition (polar residues). Composition is skewed to basic and acidic residues over residues 1059–1082 (AGRK…TEKV) and 1099–1124 (GFRE…KLSK). The span at 1127–1139 (VSVSVQPGSSSVS) shows a compositional bias: low complexity. Residues 1151-1170 (PEEKRPETAVSRLERREQLK) are compositionally biased toward basic and acidic residues. A compositionally biased stretch (polar residues) spans 1174–1183 (TLPTSVTVEI).

Directly interacts with actin-capping proteins CAPZA1, CAPZA2 and CAPZB; this interaction decreases the binding of capping proteins to actin. In terms of tissue distribution, expressed in intestinal epithelial cells (at protein level).

Its subcellular location is the cytoplasm. It is found in the cytosol. Involved in epithelial cell integrity by acting on the maintenance of the actin cytoskeleton. Positively regulates the actin polymerization, by inhibiting the interaction of actin-capping proteins with actin. In Homo sapiens (Human), this protein is Capping protein-inhibiting regulator of actin dynamics.